We begin with the raw amino-acid sequence, 1299 residues long: Phosphoribosylformylglycinamidine synthase (1299 aa).

ATP contacts are provided by residues 310–321 (GAATGAGGEIRD), 389–391 (TGY), and alanine 680. Positions 681, 720, 724, and 888 each coordinate Mg(2+). Serine 890 is an ATP binding site. Positions 1046 to 1299 (VAVLREQGVN…MFRNARVWLG (254 aa)) constitute a Glutamine amidotransferase type-1 domain. Residue cysteine 1139 is the Nucleophile of the active site. Catalysis depends on residues histidine 1264 and glutamate 1266.

In the N-terminal section; belongs to the FGAMS family. As to quaternary structure, monomer.

Its subcellular location is the cytoplasm. The enzyme catalyses N(2)-formyl-N(1)-(5-phospho-beta-D-ribosyl)glycinamide + L-glutamine + ATP + H2O = 2-formamido-N(1)-(5-O-phospho-beta-D-ribosyl)acetamidine + L-glutamate + ADP + phosphate + H(+). It participates in purine metabolism; IMP biosynthesis via de novo pathway; 5-amino-1-(5-phospho-D-ribosyl)imidazole from N(2)-formyl-N(1)-(5-phospho-D-ribosyl)glycinamide: step 1/2. Functionally, phosphoribosylformylglycinamidine synthase involved in the purines biosynthetic pathway. Catalyzes the ATP-dependent conversion of formylglycinamide ribonucleotide (FGAR) and glutamine to yield formylglycinamidine ribonucleotide (FGAM) and glutamate. This is Phosphoribosylformylglycinamidine synthase from Myxococcus xanthus (strain DK1622).